A 296-amino-acid polypeptide reads, in one-letter code: Polyadenylate-binding protein 2-A (296 aa).

The tract at residues Met1–Glu106 is disordered. A compositionally biased stretch (gly residues) spans Gly71–Gly82. Acidic residues predominate over residues Glu84–Gly97. Residues Asp107–Ser141 are a coiled coil. Positions Asn146–Tyr296 are necessary for homooligomerization. The RRM domain maps to Arg163 to Thr240.

Monomer and homooligomer. Binds RNA as a monomer and oligomerizes when bound to poly(A). As to expression, shows dynamic spatial expression throughout development. First expressed in the animal pole region of the egg and this pattern persists through to the blastula stage. In gastrula and neurula embryos, expressed mainly in ectodermal, neural and epidermal regions. Neural tissue-specific expression pattern persists into tailbud stage when expression is localized to the brain and spinal cord. At early tadpole stage, expression becomes gradually confined to the specific vesicle regions of the developing brain. At stage 39, expressed in the telencephalon and mesencephalon regions of the brain. Also detected in the eye and olfactory pit at the tadpole stage. Expressed during gut endoderm development. At stage 35, expressed exclusively in the anterior portion of the gut endoderm, which includes the prospective liver, stomach and pancreas. As development proceeds, expression becomes restricted to the pancreas, and by stage 46/47 (the seventh day of development) expression is localized exclusively to the pancreas. Expressed in most adult tissues.

The protein resides in the nucleus. Its subcellular location is the cytoplasm. In terms of biological role, involved in the 3'-end formation of mRNA precursors (pre-mRNA) by the addition of a poly(A) tail of 200-250 nt to the upstream cleavage product. Stimulates poly(A) polymerase (PAPOLA) conferring processivity on the poly(A) tail elongation reaction and also controls the poly(A) tail length. Increases the affinity of poly(A) polymerase for RNA. Binds to poly(A) and to poly(G) with high affinity. May protect the poly(A) tail from degradation. In Xenopus laevis (African clawed frog), this protein is Polyadenylate-binding protein 2-A (pabpn1-a).